A 393-amino-acid polypeptide reads, in one-letter code: NAD(P)H-quinone oxidoreductase subunit H, chloroplastic (393 aa).

Belongs to the complex I 49 kDa subunit family. NDH is composed of at least 16 different subunits, 5 of which are encoded in the nucleus.

It localises to the plastid. It is found in the chloroplast thylakoid membrane. It carries out the reaction a plastoquinone + NADH + (n+1) H(+)(in) = a plastoquinol + NAD(+) + n H(+)(out). The catalysed reaction is a plastoquinone + NADPH + (n+1) H(+)(in) = a plastoquinol + NADP(+) + n H(+)(out). NDH shuttles electrons from NAD(P)H:plastoquinone, via FMN and iron-sulfur (Fe-S) centers, to quinones in the photosynthetic chain and possibly in a chloroplast respiratory chain. The immediate electron acceptor for the enzyme in this species is believed to be plastoquinone. Couples the redox reaction to proton translocation, and thus conserves the redox energy in a proton gradient. In Arabis hirsuta (Hairy rock-cress), this protein is NAD(P)H-quinone oxidoreductase subunit H, chloroplastic.